A 557-amino-acid polypeptide reads, in one-letter code: Potassium-transporting ATPase potassium-binding subunit (557 aa).

Helical transmembrane passes span 5-25 (GFLL…PLGS), 63-83 (LSAI…MLLG), 132-152 (GLTV…FALI), 170-190 (LLRI…LFFI), 253-273 (FVQM…FGEV), 283-303 (LLWA…WAEV), 329-349 (VLVS…AVIA), 356-376 (ALGG…FGGV), 379-399 (GLYG…LMIG), 416-436 (LTAL…ALAM), 484-504 (LLAL…MAIA), and 526-546 (LFVG…FIPA).

This sequence belongs to the KdpA family. In terms of assembly, the system is composed of three essential subunits: KdpA, KdpB and KdpC.

The protein localises to the cell inner membrane. In terms of biological role, part of the high-affinity ATP-driven potassium transport (or Kdp) system, which catalyzes the hydrolysis of ATP coupled with the electrogenic transport of potassium into the cytoplasm. This subunit binds the periplasmic potassium ions and delivers the ions to the membrane domain of KdpB through an intramembrane tunnel. In Escherichia coli (strain UTI89 / UPEC), this protein is Potassium-transporting ATPase potassium-binding subunit.